Here is a 138-residue protein sequence, read N- to C-terminus: Thyrotropin subunit beta (138 aa).

The signal sequence occupies residues 1 to 20 (MTATFLMSMIFGLACGQAMS). Intrachain disulfides connect C22–C72, C36–C87, C39–C125, C47–C103, C51–C105, and C108–C115. An N-linked (GlcNAc...) asparagine glycan is attached at N43. The propeptide occupies 133–138 (MVGFSI).

This sequence belongs to the glycoprotein hormones subunit beta family. Heterodimer of a common alpha chain and a unique beta chain which confers biological specificity to thyrotropin, lutropin, follitropin and gonadotropin.

It localises to the secreted. Indispensable for the control of thyroid structure and metabolism. This chain is Thyrotropin subunit beta (TSHB), found in Bos taurus (Bovine).